A 199-amino-acid polypeptide reads, in one-letter code: Golgi to ER traffic protein 1 (199 aa).

Over 1-11 (MLLPDLHPYTI) the chain is Lumenal. The helical transmembrane segment at 12–31 (LLSIFLVLVAKQLVATIGKS) threads the bilayer. Residues 32-115 (TIQEFVWLVY…SIDKASNALI (84 aa)) are Cytoplasmic-facing. The stretch at 76 to 116 (YAKWTKLNRQADKLSAELQKLNQEIQQQKSSIDKASNALIL) forms a coiled coil. The chain crosses the membrane as a helical span at residues 116 to 136 (LVLTTLPIWIARVFYRKTHLF). At 137 to 160 (YIRQGIFPKYVEWVLALPFLPNGA) the chain is on the lumenal side. Residues 161 to 177 (VGLTIWMFAVNSVVSNF) form a helical membrane-spanning segment. Over 178–199 (SFLVSFPFAKRVSKPVRDTKVE) the chain is Cytoplasmic.

The protein belongs to the WRB/GET1 family. In terms of assembly, component of the Golgi to ER traffic (GET) complex, which is composed of GET1, GET2 and GET3. Within the complex, GET1 and GET2 form a heterotetramer which is stabilized by phosphatidylinositol binding and which binds to the GET3 homodimer.

Its subcellular location is the endoplasmic reticulum membrane. The protein resides in the golgi apparatus membrane. Required for the post-translational delivery of tail-anchored (TA) proteins to the endoplasmic reticulum. Together with GET2, acts as a membrane receptor for soluble GET3, which recognizes and selectively binds the transmembrane domain of TA proteins in the cytosol. The GET complex cooperates with the HDEL receptor ERD2 to mediate the ATP-dependent retrieval of resident ER proteins that contain a C-terminal H-D-E-L retention signal from the Golgi to the ER. This Candida albicans (strain SC5314 / ATCC MYA-2876) (Yeast) protein is Golgi to ER traffic protein 1.